The chain runs to 462 residues: tRNA(Ile)-lysidine synthase (462 aa).

27 to 32 provides a ligand contact to ATP; it reads SGGPDS.

Belongs to the tRNA(Ile)-lysidine synthase family.

Its subcellular location is the cytoplasm. The enzyme catalyses cytidine(34) in tRNA(Ile2) + L-lysine + ATP = lysidine(34) in tRNA(Ile2) + AMP + diphosphate + H(+). In terms of biological role, ligates lysine onto the cytidine present at position 34 of the AUA codon-specific tRNA(Ile) that contains the anticodon CAU, in an ATP-dependent manner. Cytidine is converted to lysidine, thus changing the amino acid specificity of the tRNA from methionine to isoleucine. This is tRNA(Ile)-lysidine synthase from Clostridioides difficile (strain 630) (Peptoclostridium difficile).